A 137-amino-acid polypeptide reads, in one-letter code: uncharacterized protein (137 aa).

This is an uncharacterized protein from Rickettsia prowazekii (strain Madrid E).